The primary structure comprises 138 residues: ATP synthase epsilon chain (138 aa).

It belongs to the ATPase epsilon chain family. As to quaternary structure, F-type ATPases have 2 components, CF(1) - the catalytic core - and CF(0) - the membrane proton channel. CF(1) has five subunits: alpha(3), beta(3), gamma(1), delta(1), epsilon(1). CF(0) has three main subunits: a, b and c.

It localises to the cell inner membrane. Functionally, produces ATP from ADP in the presence of a proton gradient across the membrane. The protein is ATP synthase epsilon chain of Wigglesworthia glossinidia brevipalpis.